A 265-amino-acid polypeptide reads, in one-letter code: Inositol monophosphatase 2 (265 aa).

Mg(2+)-binding residues include Glu-65, Asp-86, Leu-88, and Asp-89. Glu-65 contacts substrate. Substrate is bound by residues 88-91 (LDGT), 189-191 (GSC), Glu-208, and Asp-216. Asp-216 is a Mg(2+) binding site.

The protein belongs to the inositol monophosphatase superfamily. It depends on Mg(2+) as a cofactor. In terms of tissue distribution, low expression in roots, stems, leaves, flowers and young and mature green fruits. Expressed in the stem/leaf junctions, below the shoot apex and on the abaxial side of the petiole of the first expanded leaflets.

The enzyme catalyses a myo-inositol phosphate + H2O = myo-inositol + phosphate. It functions in the pathway polyol metabolism; myo-inositol biosynthesis; myo-inositol from D-glucose 6-phosphate: step 2/2. Responsible for the provision of inositol required for synthesis of phosphatidylinositol and polyphosphoinositides. In Solanum lycopersicum (Tomato), this protein is Inositol monophosphatase 2 (IMP2).